Consider the following 1857-residue polypeptide: Fatty acid synthase subunit alpha (1857 aa).

Residues 96–132 (EEEPEATEPAPSATPAAPAAAPAAGAPPPPPSAGPAA) form a disordered region. A compositionally biased stretch (low complexity) spans 102–119 (TEPAPSATPAAPAAAPAA). Positions 139-214 (VTAVDILRTL…ASMQATFNGQ (76 aa)) constitute a Carrier domain. Serine 174 is modified (O-(pantetheine 4'-phosphoryl)serine). Positions 577-604 (QIIPQENGHSKKGGRSAAKRNTPTRPGK) are disordered. Positions 648-845 (KNVLMTGAGA…GAVIGWTRGT (198 aa)) are beta-ketoacyl reductase. Positions 1092 to 1633 (LQEIVIQEDL…QKGAQVIGIH (542 aa)) constitute a Ketosynthase family 3 (KS3) domain. Residues cysteine 1275, histidine 1518, and histidine 1559 each act as for beta-ketoacyl synthase activity in the active site. Mg(2+)-binding residues include aspartate 1743, valine 1744, and glutamate 1745. Acetyl-CoA is bound by residues 1743–1745 (DVE), tyrosine 1769, serine 1779, 1788–1798 (EAVFKSLGVSS), 1812–1815 (VDAN), and 1842–1844 (ISH). Residues serine 1843 and histidine 1844 each coordinate Mg(2+).

It belongs to the thiolase-like superfamily. Fungal fatty acid synthetase subunit alpha family. In terms of assembly, [Alpha(6)beta(6)] hexamers of two multifunctional subunits (alpha and beta).

The catalysed reaction is acetyl-CoA + n malonyl-CoA + 2n NADPH + 4n H(+) = a long-chain-acyl-CoA + n CoA + n CO2 + 2n NADP(+).. It carries out the reaction a fatty acyl-[ACP] + malonyl-[ACP] + H(+) = a 3-oxoacyl-[ACP] + holo-[ACP] + CO2. The enzyme catalyses a (3R)-hydroxyacyl-[ACP] + NADP(+) = a 3-oxoacyl-[ACP] + NADPH + H(+). Functionally, fatty acid synthetase catalyzes the formation of long-chain fatty acids from acetyl-CoA, malonyl-CoA and NADPH. The alpha subunit contains domains for: acyl carrier protein, 3-oxoacyl-[acyl-carrier-protein] reductase, and 3-oxoacyl-[acyl-carrier-protein] synthase. In Penicillium patulum (Penicillium griseofulvum), this protein is Fatty acid synthase subunit alpha (FAS2).